The following is a 436-amino-acid chain: Probable D-serine dehydratase (436 aa).

At K111 the chain carries N6-(pyridoxal phosphate)lysine.

It belongs to the serine/threonine dehydratase family. DsdA subfamily. Pyridoxal 5'-phosphate serves as cofactor.

The catalysed reaction is D-serine = pyruvate + NH4(+). The polypeptide is Probable D-serine dehydratase (Lactiplantibacillus plantarum (strain ATCC BAA-793 / NCIMB 8826 / WCFS1) (Lactobacillus plantarum)).